A 289-amino-acid chain; its full sequence is ATP synthase gamma chain (289 aa).

Belongs to the ATPase gamma chain family. F-type ATPases have 2 components, CF(1) - the catalytic core - and CF(0) - the membrane proton channel. CF(1) has five subunits: alpha(3), beta(3), gamma(1), delta(1), epsilon(1). CF(0) has three main subunits: a, b and c.

The protein resides in the cell inner membrane. Functionally, produces ATP from ADP in the presence of a proton gradient across the membrane. The gamma chain is believed to be important in regulating ATPase activity and the flow of protons through the CF(0) complex. The sequence is that of ATP synthase gamma chain from Aromatoleum aromaticum (strain DSM 19018 / LMG 30748 / EbN1) (Azoarcus sp. (strain EbN1)).